Consider the following 159-residue polypeptide: Putative UPF0479 protein YDR545C-A (159 aa).

2 helical membrane-spanning segments follow: residues 38 to 58 (IVFC…KVLQ) and 135 to 155 (VPMI…ISQH).

It belongs to the UPF0479 family.

The protein localises to the membrane. This chain is Putative UPF0479 protein YDR545C-A, found in Saccharomyces cerevisiae (strain ATCC 204508 / S288c) (Baker's yeast).